Consider the following 277-residue polypeptide: Bis(5'-nucleosyl)-tetraphosphatase, symmetrical (277 aa).

This sequence belongs to the Ap4A hydrolase family.

It carries out the reaction P(1),P(4)-bis(5'-adenosyl) tetraphosphate + H2O = 2 ADP + 2 H(+). Hydrolyzes diadenosine 5',5'''-P1,P4-tetraphosphate to yield ADP. The polypeptide is Bis(5'-nucleosyl)-tetraphosphatase, symmetrical (Chromobacterium violaceum (strain ATCC 12472 / DSM 30191 / JCM 1249 / CCUG 213 / NBRC 12614 / NCIMB 9131 / NCTC 9757 / MK)).